The sequence spans 433 residues: UDP-N-acetylglucosamine 1-carboxyvinyltransferase 1 (433 aa).

Residue 22–23 (KN) coordinates phosphoenolpyruvate. R95 serves as a coordination point for UDP-N-acetyl-alpha-D-glucosamine. The Proton donor role is filled by C119. Residue C119 is modified to 2-(S-cysteinyl)pyruvic acid O-phosphothioketal. UDP-N-acetyl-alpha-D-glucosamine is bound by residues 124–128 (RPVDL), D307, and V329.

It belongs to the EPSP synthase family. MurA subfamily.

Its subcellular location is the cytoplasm. It carries out the reaction phosphoenolpyruvate + UDP-N-acetyl-alpha-D-glucosamine = UDP-N-acetyl-3-O-(1-carboxyvinyl)-alpha-D-glucosamine + phosphate. It functions in the pathway cell wall biogenesis; peptidoglycan biosynthesis. Cell wall formation. Adds enolpyruvyl to UDP-N-acetylglucosamine. This Latilactobacillus sakei subsp. sakei (strain 23K) (Lactobacillus sakei subsp. sakei) protein is UDP-N-acetylglucosamine 1-carboxyvinyltransferase 1.